Here is a 192-residue protein sequence, read N- to C-terminus: GTP cyclohydrolase 1 (192 aa).

3 residues coordinate Zn(2+): Cys-76, His-79, and Cys-148.

The protein belongs to the GTP cyclohydrolase I family. As to quaternary structure, toroid-shaped homodecamer, composed of two pentamers of five dimers.

The enzyme catalyses GTP + H2O = 7,8-dihydroneopterin 3'-triphosphate + formate + H(+). It participates in cofactor biosynthesis; 7,8-dihydroneopterin triphosphate biosynthesis; 7,8-dihydroneopterin triphosphate from GTP: step 1/1. This Carboxydothermus hydrogenoformans (strain ATCC BAA-161 / DSM 6008 / Z-2901) protein is GTP cyclohydrolase 1.